The following is a 692-amino-acid chain: Single-strand DNA endonuclease ASTE1 (692 aa).

It belongs to the asteroid family.

Functionally, structure-specific DNA endonuclease that specifically cleaves single-stranded DNA and 3' overhang DNA. In Danio rerio (Zebrafish), this protein is Single-strand DNA endonuclease ASTE1 (aste1a).